The following is a 680-amino-acid chain: NADPH--cytochrome P450 reductase (680 aa).

Topologically, residues 1-5 (MALDK) are lumenal. A helical transmembrane segment spans residues 6–23 (LDLYVIIVLAVAVAAYFA). The Cytoplasmic segment spans residues 24–680 (KNQFLDQPQD…VQNRYQEDVW (657 aa)). The region spanning 60-204 (TLLLFGSQTG…DFLTWKDNVF (145 aa)) is the Flavodoxin-like domain. Residues 66–71 (SQTGTA), 117–120 (ATYG), 152–161 (LGNSTYEFYN), and aspartate 187 contribute to the FMN site. Residues 264–509 (THPYLAKISK…SGPRNKFNKF (246 aa)) form the FAD-binding FR-type domain. Arginine 283 serves as a coordination point for NADP(+). FAD-binding positions include 439–442 (RYYS), 457–459 (TAV), and 473–476 (GVVT). NADP(+)-binding positions include threonine 537, 599 to 600 (SR), 606 to 610 (KVYVQ), and aspartate 642. Tryptophan 680 is a binding site for FAD.

The protein belongs to the NADPH--cytochrome P450 reductase family. It in the N-terminal section; belongs to the flavodoxin family. In the C-terminal section; belongs to the flavoprotein pyridine nucleotide cytochrome reductase family. FAD is required as a cofactor. Requires FMN as cofactor.

The protein resides in the endoplasmic reticulum membrane. The protein localises to the mitochondrion outer membrane. It is found in the cell membrane. The catalysed reaction is 2 oxidized [cytochrome P450] + NADPH = 2 reduced [cytochrome P450] + NADP(+) + H(+). This enzyme is required for electron transfer from NADP to cytochrome P450 in microsomes. It can also provide electron transfer to heme oxygenase and cytochrome B5. Involved in ergosterol biosynthesis. This is NADPH--cytochrome P450 reductase from Candida maltosa (Yeast).